Reading from the N-terminus, the 492-residue chain is MAKDIYKTFKRSVSGIVGGNNINGEGSSSPSTSAPQVKYRGGTGRTWIHPPDYLINGHVEYVARFLGCVETPKANGSDVAREAIHAIRFQRDLKRSEQTRETAKLQKVEIRISIDNVIIADIKTKAPMYTFPLGRISFCADDKDDKRMFSFIARAEGASGKPSCYAFTSEKLAEDITLTIGEAFDLAYKRFLDKNRTSLENQKQIYILKKKIVELETENQVLIERLAEALRANSKADYENTGPPIYPGLGPPALPLSPMPQGPPPNIPPSSIYSMPRANDLPPTEMAPTLPQISTSSNGASPSVSPASTSPSGPAPSIPPPRPPALAPPPPVAPRRNPVVSPKNSTAGLLDGLELGSAEPAKKAPSNIFDDSFDPRAGEKKSTAAEYNPFGADFLSGIQNGKEAPPSASAELLASEAIARLPKPESSSVPPKKTAAEYDAMINEVEKKLAAMSSGSFEFGQLQTGDLGGIEGESDYGTPSDRLNPKMMNLKQ.

Positions 19-29 (GNNINGEGSSS) are enriched in low complexity. The interval 19–38 (GNNINGEGSSSPSTSAPQVK) is disordered. Residues 55 to 215 (INGHVEYVAR…YILKKKIVEL (161 aa)) enclose the PID domain. Disordered regions lie at residues 241-385 (TGPP…STAA) and 464-492 (TGDLGGIEGESDYGTPSDRLNPKMMNLKQ). Pro residues predominate over residues 244 to 268 (PIYPGLGPPALPLSPMPQGPPPNIP). Residues 300 to 312 (ASPSVSPASTSPS) are compositionally biased toward low complexity. Residues 313-333 (GPAPSIPPPRPPALAPPPPVA) show a composition bias toward pro residues. The span at 373–383 (FDPRAGEKKST) shows a compositional bias: basic and acidic residues.

The protein belongs to the ced-6 family. As to quaternary structure, homodimer. Interacts with ced-1. Interacts with E3 ubiquitin-protein ligase trim-21. Detected in gonadal sheath cells.

The protein localises to the cytoplasm. May function as an adapter protein in a pathway that mediates recognition and phagocytosis of apoptotic cells during normal development. Promotes engulfment of cells at both early and late stages of apoptosis. Required for actin reorganization around apoptotic cells. Plays a role in protecting dopaminergic neurons from oxidative stress-induced degeneration. Mediates recruitment of E3 ubiquitin-protein ligase trim-21 to the apoptotic cell surface which promotes ubiquitination and degradation of ced-1. The protein is Cell death protein 6 of Caenorhabditis elegans.